Here is a 355-residue protein sequence, read N- to C-terminus: Guanine nucleotide-binding protein subunit alpha-14 (355 aa).

The 322-residue stretch at 34 to 355 (RELKLLLLGT…QLNLREFNLV (322 aa)) folds into the G-alpha domain. Positions 37–50 (KLLLLGTGESGKST) are G1 motif. Residues 42–49 (GTGESGKS), 176–182 (LRVRVPT), 201–205 (DVGGQ), 270–273 (NKKD), and alanine 327 each bind GTP. Serine 49 lines the Mg(2+) pocket. Residues 174 to 182 (DVLRVRVPT) are G2 motif. Residue arginine 179 is modified to ADP-ribosylarginine; by cholera toxin. Residue threonine 182 participates in Mg(2+) binding. The segment at 197–206 (FRMVDVGGQR) is G3 motif. Positions 266–273 (ILFLNKKD) are G4 motif. Residues 325 to 330 (TCATDT) are G5 motif.

This sequence belongs to the G-alpha family. G(q) subfamily. As to quaternary structure, g proteins are composed of 3 units; alpha, beta and gamma. The alpha chain contains the guanine nucleotide binding site.

In terms of biological role, guanine nucleotide-binding proteins (G proteins) are involved as modulators or transducers in various transmembrane signaling systems. The protein is Guanine nucleotide-binding protein subunit alpha-14 (GNA14) of Homo sapiens (Human).